An 88-amino-acid polypeptide reads, in one-letter code: Small ribosomal subunit protein bS20 (88 aa).

Residues 1-12 (MANHKSALKRAK) are compositionally biased toward basic residues. Residues 1–23 (MANHKSALKRAKQNTIKQMRNRS) form a disordered region.

This sequence belongs to the bacterial ribosomal protein bS20 family.

In terms of biological role, binds directly to 16S ribosomal RNA. The polypeptide is Small ribosomal subunit protein bS20 (Desulfatibacillum aliphaticivorans).